A 262-amino-acid chain; its full sequence is Flap endonuclease Xni (262 aa).

Residue Asp-105 participates in Mg(2+) binding. Residues Glu-162–Leu-254 form the 5'-3' exonuclease domain. Leu-172, Ala-173, Pro-181, Ile-183, and Ile-186 together coordinate K(+). Positions Gly-185 to Ser-190 are interaction with DNA.

This sequence belongs to the Xni family. It depends on Mg(2+) as a cofactor. K(+) is required as a cofactor.

Its function is as follows. Has flap endonuclease activity. During DNA replication, flap endonucleases cleave the 5'-overhanging flap structure that is generated by displacement synthesis when DNA polymerase encounters the 5'-end of a downstream Okazaki fragment. The protein is Flap endonuclease Xni of Shewanella baltica (strain OS195).